The chain runs to 218 residues: Glutathione S-transferase U24 (218 aa).

The GST N-terminal domain occupies 3–82 (DEVILLDFWA…YIDETWPDNN (80 aa)). Glutathione is bound by residues 13-14 (SM), 39-40 (NK), 53-54 (KI), and 66-67 (ES). In terms of domain architecture, GST C-terminal spans 88–215 (DPYKRAHAKF…TFISERRKKL (128 aa)). Thr-148 carries the phosphothreonine modification.

This sequence belongs to the GST superfamily. Tau family.

It localises to the cytoplasm. The protein resides in the cytosol. It carries out the reaction RX + glutathione = an S-substituted glutathione + a halide anion + H(+). Functionally, may be involved in the conjugation of reduced glutathione to a wide number of exogenous and endogenous hydrophobic electrophiles and have a detoxification role against certain herbicides. The chain is Glutathione S-transferase U24 (GSTU24) from Arabidopsis thaliana (Mouse-ear cress).